Consider the following 636-residue polypeptide: Threonine--tRNA ligase (636 aa).

In terms of domain architecture, TGS spans 1–63 (MNEINVTLPD…ADGARVEIIT (63 aa)). Positions 243-534 (DHRKLGRELD…LIEHFAGNFP (292 aa)) are catalytic. Residues Cys335, His386, and His511 each coordinate Zn(2+).

It belongs to the class-II aminoacyl-tRNA synthetase family. Homodimer. The cofactor is Zn(2+).

Its subcellular location is the cytoplasm. The enzyme catalyses tRNA(Thr) + L-threonine + ATP = L-threonyl-tRNA(Thr) + AMP + diphosphate + H(+). Catalyzes the attachment of threonine to tRNA(Thr) in a two-step reaction: L-threonine is first activated by ATP to form Thr-AMP and then transferred to the acceptor end of tRNA(Thr). Also edits incorrectly charged L-seryl-tRNA(Thr). This chain is Threonine--tRNA ligase, found in Citrifermentans bemidjiense (strain ATCC BAA-1014 / DSM 16622 / JCM 12645 / Bem) (Geobacter bemidjiensis).